The chain runs to 161 residues: UPF0763 protein Cla_1130 (161 aa).

Belongs to the UPF0763 family.

This is UPF0763 protein Cla_1130 from Campylobacter lari (strain RM2100 / D67 / ATCC BAA-1060).